The following is an 898-amino-acid chain: Tight junction protein ZO-3 (898 aa).

One can recognise a PDZ 1 domain in the interval Thr-11–Arg-93. A disordered region spans residues Pro-98 to Gly-165. Ser-128, Ser-156, Ser-161, Ser-195, and Ser-313 each carry phosphoserine. The region spanning Ser-187–Arg-264 is the PDZ 2 domain. The interval Leu-295–Pro-368 is disordered. Over residues Arg-312 to Ser-349 the composition is skewed to basic and acidic residues. Thr-319 carries the post-translational modification Phosphothreonine. 2 positions are modified to phosphoserine: Ser-321 and Ser-360. A PDZ 3 domain is found at Asp-369–Leu-435. Residues Gly-464–Ala-538 enclose the SH3 domain. One can recognise a Guanylate kinase-like domain in the interval Leu-569–Arg-750. At Ser-580 the chain carries Phosphoserine. The segment at Thr-759–Leu-898 is disordered. A compositionally biased stretch (acidic residues) spans Asp-762–Leu-772. Over residues Ala-780–Ser-790 the composition is skewed to low complexity. Residues Tyr-796 to Glu-814 are compositionally biased toward acidic residues. The segment covering Glu-831–Arg-841 has biased composition (basic and acidic residues). Phosphoserine is present on residues Ser-835, Ser-884, and Ser-885.

The protein belongs to the MAGUK family. In terms of assembly, heterodimer with TJP1. Interacts with UBN1. Interacts with occludin OCLN and claudins. Interacts with PATJ. Interacts with FASLG. Interacts with CCND1. In terms of processing, phosphorylated.

It is found in the cell membrane. The protein resides in the cell junction. Its subcellular location is the tight junction. It localises to the nucleus. TJP1, TJP2, and TJP3 are closely related scaffolding proteins that link tight junction (TJ) transmembrane proteins such as claudins, junctional adhesion molecules, and occludin to the actin cytoskeleton. The tight junction acts to limit movement of substances through the paracellular space and as a boundary between the compositionally distinct apical and basolateral plasma membrane domains of epithelial and endothelial cells. Binds and recruits PATJ to tight junctions where it connects and stabilizes apical and lateral components of tight junctions. Promotes cell-cycle progression through the sequestration of cyclin D1 (CCND1) at tight junctions during mitosis which prevents CCND1 degradation during M-phase and enables S-phase transition. With TJP1 and TJP2, participates in the junctional retention and stability of the transcription factor DBPA, but is not involved in its shuttling to the nucleus. Contrary to TJP2, TJP3 is dispensable for individual viability, embryonic development, epithelial differentiation, and the establishment of TJs, at least in the laboratory environment. The protein is Tight junction protein ZO-3 (TJP3) of Canis lupus familiaris (Dog).